The primary structure comprises 375 residues: Tyrosine--tRNA ligase (375 aa).

Tyrosine 37, tyrosine 168, glutamine 172, aspartate 175, and glutamine 190 together coordinate L-tyrosine. Residues 251–255 (KMSKS) carry the 'KMSKS' region motif. Lysine 254 is a binding site for ATP.

It belongs to the class-I aminoacyl-tRNA synthetase family. TyrS type 4 subfamily. As to quaternary structure, homodimer.

It localises to the cytoplasm. It catalyses the reaction tRNA(Tyr) + L-tyrosine + ATP = L-tyrosyl-tRNA(Tyr) + AMP + diphosphate + H(+). Its function is as follows. Catalyzes the attachment of tyrosine to tRNA(Tyr) in a two-step reaction: tyrosine is first activated by ATP to form Tyr-AMP and then transferred to the acceptor end of tRNA(Tyr). The protein is Tyrosine--tRNA ligase of Pyrococcus abyssi (strain GE5 / Orsay).